Consider the following 236-residue polypeptide: 2,3,4,5-tetrahydropyridine-2,6-dicarboxylate N-acetyltransferase (236 aa).

It belongs to the transferase hexapeptide repeat family. DapH subfamily.

The enzyme catalyses (S)-2,3,4,5-tetrahydrodipicolinate + acetyl-CoA + H2O = L-2-acetamido-6-oxoheptanedioate + CoA. Its pathway is amino-acid biosynthesis; L-lysine biosynthesis via DAP pathway; LL-2,6-diaminopimelate from (S)-tetrahydrodipicolinate (acetylase route): step 1/3. In terms of biological role, catalyzes the transfer of an acetyl group from acetyl-CoA to tetrahydrodipicolinate. The polypeptide is 2,3,4,5-tetrahydropyridine-2,6-dicarboxylate N-acetyltransferase (Oceanobacillus iheyensis (strain DSM 14371 / CIP 107618 / JCM 11309 / KCTC 3954 / HTE831)).